A 116-amino-acid polypeptide reads, in one-letter code: Type IV narrow pilus major component PilA5 (116 aa).

A propeptide spans 1–5 (MRAKG) (leader sequence). Phe6 is modified (N-methylphenylalanine). The helical transmembrane segment at 6–26 (FTLIELAIVIVIIGILVAIAV) threads the bilayer.

Post-translationally, glycosylated.

Its subcellular location is the cell inner membrane. The protein localises to the cell outer membrane. The protein resides in the periplasm. Plays an essential role in forming the main structure of the narrow T4P pili that participates in twitching motility. This Thermus thermophilus (strain ATCC BAA-163 / DSM 7039 / HB27) protein is Type IV narrow pilus major component PilA5 (pilA5).